The following is a 428-amino-acid chain: Histidinol dehydrogenase (428 aa).

NAD(+)-binding residues include Y125, Q187, and N210. Substrate-binding residues include S234, Q256, and H259. Q256 and H259 together coordinate Zn(2+). Catalysis depends on proton acceptor residues E323 and H324. Substrate is bound by residues H324, D357, E411, and H416. D357 is a Zn(2+) binding site. H416 is a binding site for Zn(2+).

It belongs to the histidinol dehydrogenase family. It depends on Zn(2+) as a cofactor.

The catalysed reaction is L-histidinol + 2 NAD(+) + H2O = L-histidine + 2 NADH + 3 H(+). Its pathway is amino-acid biosynthesis; L-histidine biosynthesis; L-histidine from 5-phospho-alpha-D-ribose 1-diphosphate: step 9/9. In terms of biological role, catalyzes the sequential NAD-dependent oxidations of L-histidinol to L-histidinaldehyde and then to L-histidine. This Bacteroides thetaiotaomicron (strain ATCC 29148 / DSM 2079 / JCM 5827 / CCUG 10774 / NCTC 10582 / VPI-5482 / E50) protein is Histidinol dehydrogenase.